We begin with the raw amino-acid sequence, 126 residues long: Nascent polypeptide-associated complex protein (126 aa).

Residues 10 to 77 (PRMMKQMQKM…AKKVAKAEEK (68 aa)) enclose the NAC-A/B domain.

Belongs to the NAC-alpha family. In terms of assembly, homodimer. Interacts with the ribosome. Binds ribosomal RNA.

Functionally, contacts the emerging nascent chain on the ribosome. The sequence is that of Nascent polypeptide-associated complex protein from Methanococcus maripaludis (strain C5 / ATCC BAA-1333).